The following is an 809-amino-acid chain: Leucine-rich repeat and calponin homology domain-containing protein (809 aa).

The segment at 27–53 is disordered; sequence GSASLPGSGTGSGSGIGHAGNTSSSTS. Gly residues predominate over residues 34–44; that stretch reads SGTGSGSGIGH. LRR repeat units lie at residues 72–96, 98–121, 122–144, 145–168, 170–189, 191–213, 214–236, 238–258, and 260–282; these read EAHF…GTKY, LTDT…VTTF, AFLE…VKQL, SSLT…CFLP, QVLL…LGRL, QTLT…LGEL, RSLR…LTCL, LISL…IRHM, and TLVE…CMRG. 3 disordered regions span residues 295 to 373, 423 to 442, and 490 to 550; these read TKDE…LHCV, LSYA…QDDD, and KHPN…VDDV. Positions 319-336 are enriched in polar residues; that stretch reads HNSSGNVLEASTTGSTNN. Residues 351 to 368 show a composition bias toward basic and acidic residues; sequence GLDKRWSHDAPTKSKTDS. Positions 518 to 532 are enriched in polar residues; it reads NTLPKSIMKQNSNQI. One can recognise a Calponin-homology (CH) domain in the interval 662–776; that stretch reads QREETELMSQ…TVGELFRLHG (115 aa). The segment at 783–809 is disordered; sequence GNSSGAATPTKSPTRTTRATMSPTPLA. Positions 788–809 are enriched in polar residues; it reads AATPTKSPTRTTRATMSPTPLA.

Its subcellular location is the cytoplasm. The protein resides in the cytoskeleton. It is found in the cell cortex. The protein localises to the cleavage furrow. Functionally, may play a role in the stabilization of the actin-rich cell cortex during cell division. This Drosophila melanogaster (Fruit fly) protein is Leucine-rich repeat and calponin homology domain-containing protein.